Here is a 160-residue protein sequence, read N- to C-terminus: MAPDRALAAQARPEQEFFCFRVGDLRLGVPSENVLEVLRAGLLTPLPRTPSFIMGVTGHRGEVLPVLDLLRFLSKGEARIGPRTRLFVGVTGSYVAGVVADTVLGLRRIPVADILPPPLGGDAAAEHLLGVVQASGNQEAINLLNFSKLLQTARQRAVAR.

Residues 14–155 (EQEFFCFRVG…FSKLLQTARQ (142 aa)) enclose the CheW-like domain.

In terms of biological role, necessary for proper aggregation of cells to form fruiting bodies. FRZ genes define a system of signal transduction analogous to the enterobacterial chemotaxis systems. In Myxococcus xanthus, this protein is Protein FrzA (frzA).